A 396-amino-acid polypeptide reads, in one-letter code: KiSS-1 receptor (396 aa).

The Extracellular segment spans residues 1–46 (MAAEATLGPNVSWWAPSNASGCPGCGVNASDGPGSAPRPLDAWLVP). 3 N-linked (GlcNAc...) asparagine glycosylation sites follow: asparagine 10, asparagine 18, and asparagine 28. The helical transmembrane segment at 47-67 (LFFAALMLLGLVGNSLVIFVI) threads the bilayer. Residues 68–90 (CRHKHMQTVTNFYIANLAATDVT) are Cytoplasmic-facing. A helical membrane pass occupies residues 91-111 (FLLCCVPFTALLYPLPTWVLG). The Extracellular portion of the chain corresponds to 112-120 (DFMCKFVNY). A disulfide bridge connects residues cysteine 115 and cysteine 191. Residues 121-138 (IQQVSVQATCATLTAMSV) traverse the membrane as a helical segment. At 139 to 159 (DRWYVTVFPLRALHRRTPRLA) the chain is on the cytoplasmic side. The chain crosses the membrane as a helical span at residues 160–180 (LTVSLSIWVGSAAVSAPVLAL). Residues 181–202 (HRLSPGPHTYCSEAFPSRALER) lie on the Extracellular side of the membrane. The helical transmembrane segment at 203–223 (AFALYNLLALYLLPLLATCAC) threads the bilayer. Over 224–264 (YGAMLRHLGRAAVRPAPTDGALQGQLLAQRAGAVRTKVSRL) the chain is Cytoplasmic. Residues 265 to 285 (VAAVVLLFAACWGPIQLFLVL) traverse the membrane as a helical segment. The Extracellular segment spans residues 286–305 (QALGPSGAWHPRSYAAYALK). A helical transmembrane segment spans residues 306–326 (IWAHCMSYSNSALNPLLYAFL). Residues 327–396 (GSHFRQAFCR…SVQDEHTAPL (70 aa)) are Cytoplasmic-facing. Residues 346 to 396 (RRPHASAHSDRAAPHSVPHSRAAHPVRVRTPEPGNPVRRSPSVQDEHTAPL) form a disordered region.

The protein belongs to the G-protein coupled receptor 1 family. As to expression, highest expression levels in the cerebrum and cecum. Moderate expression in the ovary, colon and placenta. Low levels in the uterus, small intestine, and thymus. Expressed only moderately in the placenta. No expression in kidney tissues. Has a complex and abundant central nervous system expression pattern. Expressed in brain regions such as pons, midbrain, thalamus, hypothalamus, hippocampus, amygdala, cortex, frontal cortex, and striatum. No expression in the cerebellum. Persistent expression is detected in hypothalamus throughout postnatal development, with maximum expression levels at puberty in both male and female. Hypothalamic expression changed throughout the estrus cycle and is significantly increased after gonadectomy, a rise that is prevented by sex steroid replacement both in males and females.

The protein resides in the cell membrane. Functionally, receptor for metastin, a C-terminally amidated peptide of KiSS1. KiSS1 is a metastasis suppressor protein. Activation of the receptor inhibits cell proliferation and cell migration, key characteristics of tumor metastasis. The receptor is essential for normal gonadotropin-released hormone physiology and for puberty. The hypothalamic KiSS1/KISS1R system is a pivotal factor in central regulation of the gonadotropic axis at puberty and in adulthood. Analysis of the transduction pathways activated by the receptor identifies coupling to phospholipase C and intracellular calcium release through pertussis toxin-insensitive G(q) proteins. This chain is KiSS-1 receptor (Kiss1r), found in Rattus norvegicus (Rat).